The following is a 195-amino-acid chain: ATP-dependent Clp protease proteolytic subunit (195 aa).

Serine 97 serves as the catalytic Nucleophile. Histidine 122 is an active-site residue.

The protein belongs to the peptidase S14 family. Fourteen ClpP subunits assemble into 2 heptameric rings which stack back to back to give a disk-like structure with a central cavity, resembling the structure of eukaryotic proteasomes.

It localises to the cytoplasm. It carries out the reaction Hydrolysis of proteins to small peptides in the presence of ATP and magnesium. alpha-casein is the usual test substrate. In the absence of ATP, only oligopeptides shorter than five residues are hydrolyzed (such as succinyl-Leu-Tyr-|-NHMec, and Leu-Tyr-Leu-|-Tyr-Trp, in which cleavage of the -Tyr-|-Leu- and -Tyr-|-Trp bonds also occurs).. Functionally, cleaves peptides in various proteins in a process that requires ATP hydrolysis. Has a chymotrypsin-like activity. Plays a major role in the degradation of misfolded proteins. This is ATP-dependent Clp protease proteolytic subunit from Campylobacter hominis (strain ATCC BAA-381 / DSM 21671 / CCUG 45161 / LMG 19568 / NCTC 13146 / CH001A).